The primary structure comprises 159 residues: Ribosomal RNA large subunit methyltransferase H (159 aa).

Residues leucine 76, glycine 108, and 127–132 (FGQLTL) contribute to the S-adenosyl-L-methionine site.

Belongs to the RNA methyltransferase RlmH family. As to quaternary structure, homodimer.

It localises to the cytoplasm. The catalysed reaction is pseudouridine(1915) in 23S rRNA + S-adenosyl-L-methionine = N(3)-methylpseudouridine(1915) in 23S rRNA + S-adenosyl-L-homocysteine + H(+). In terms of biological role, specifically methylates the pseudouridine at position 1915 (m3Psi1915) in 23S rRNA. The sequence is that of Ribosomal RNA large subunit methyltransferase H from Streptococcus gordonii (strain Challis / ATCC 35105 / BCRC 15272 / CH1 / DL1 / V288).